A 213-amino-acid polypeptide reads, in one-letter code: Uracil phosphoribosyltransferase (213 aa).

5-phospho-alpha-D-ribose 1-diphosphate is bound by residues R78, R103, and 130 to 138 (DPMLATGGS). Residues I193 and 198-200 (GDA) contribute to the uracil site. 5-phospho-alpha-D-ribose 1-diphosphate is bound at residue D199.

This sequence belongs to the UPRTase family. Mg(2+) serves as cofactor.

It catalyses the reaction UMP + diphosphate = 5-phospho-alpha-D-ribose 1-diphosphate + uracil. Its pathway is pyrimidine metabolism; UMP biosynthesis via salvage pathway; UMP from uracil: step 1/1. With respect to regulation, allosterically activated by GTP. In terms of biological role, catalyzes the conversion of uracil and 5-phospho-alpha-D-ribose 1-diphosphate (PRPP) to UMP and diphosphate. This chain is Uracil phosphoribosyltransferase, found in Bordetella bronchiseptica (strain ATCC BAA-588 / NCTC 13252 / RB50) (Alcaligenes bronchisepticus).